Reading from the N-terminus, the 486-residue chain is Betaine aldehyde dehydrogenase (486 aa).

Residues T23 and D90 each coordinate K(+). NAD(+) is bound at residue G147–W149. The active-site Charge relay system is the K159. Residues K173–E176 and E226–T229 contribute to the NAD(+) site. L241 is a binding site for K(+). The Proton acceptor role is filled by E247. 3 residues coordinate NAD(+): G249, C281, and E382. Catalysis depends on C281, which acts as the Nucleophile. Cysteine sulfenic acid (-SOH) is present on C281. Residues K452 and G455 each coordinate K(+). E459 serves as the catalytic Charge relay system.

This sequence belongs to the aldehyde dehydrogenase family. In terms of assembly, dimer of dimers. The cofactor is K(+).

The catalysed reaction is betaine aldehyde + NAD(+) + H2O = glycine betaine + NADH + 2 H(+). The protein operates within amine and polyamine biosynthesis; betaine biosynthesis via choline pathway; betaine from betaine aldehyde: step 1/1. In terms of biological role, involved in the biosynthesis of the osmoprotectant glycine betaine. Catalyzes the irreversible oxidation of betaine aldehyde to the corresponding acid. The sequence is that of Betaine aldehyde dehydrogenase from Vibrio campbellii (strain ATCC BAA-1116).